Here is a 403-residue protein sequence, read N- to C-terminus: Phosphopentomutase (403 aa).

The Mn(2+) site is built by Asp13, Asp298, His303, Asp339, His340, and His351.

This sequence belongs to the phosphopentomutase family. Mn(2+) is required as a cofactor.

The protein localises to the cytoplasm. The enzyme catalyses 2-deoxy-alpha-D-ribose 1-phosphate = 2-deoxy-D-ribose 5-phosphate. The catalysed reaction is alpha-D-ribose 1-phosphate = D-ribose 5-phosphate. The protein operates within carbohydrate degradation; 2-deoxy-D-ribose 1-phosphate degradation; D-glyceraldehyde 3-phosphate and acetaldehyde from 2-deoxy-alpha-D-ribose 1-phosphate: step 1/2. Functionally, isomerase that catalyzes the conversion of deoxy-ribose 1-phosphate (dRib-1-P) and ribose 1-phosphate (Rib-1-P) to deoxy-ribose 5-phosphate (dRib-5-P) and ribose 5-phosphate (Rib-5-P), respectively. This is Phosphopentomutase from Streptococcus pneumoniae (strain JJA).